Here is a 59-residue protein sequence, read N- to C-terminus: Large ribosomal subunit protein bL33 (59 aa).

Belongs to the bacterial ribosomal protein bL33 family.

The protein is Large ribosomal subunit protein bL33 of Borrelia turicatae (strain 91E135).